Here is a 268-residue protein sequence, read N- to C-terminus: Nuclear protein UL4 homolog (268 aa).

This sequence belongs to the alphaherpesvirinae HHV-1 UL4 family.

Its subcellular location is the host nucleus. The chain is Nuclear protein UL4 homolog (MDV016) from Gallid herpesvirus 2 (strain Chicken/Md5/ATCC VR-987) (GaHV-2).